Consider the following 132-residue polypeptide: uncharacterized protein (132 aa).

This is an uncharacterized protein from Botryotinia fuckeliana (Noble rot fungus).